Here is a 521-residue protein sequence, read N- to C-terminus: GMP synthase [glutamine-hydrolyzing] (521 aa).

Residues 5–197 form the Glutamine amidotransferase type-1 domain; the sequence is KILILDFGSQ…VLDICGAQPG (193 aa). Cys81 (nucleophile) is an active-site residue. Residues His171 and Glu173 contribute to the active site. The 193-residue stretch at 198–390 folds into the GMPS ATP-PPase domain; it reads WTMPNYIEEA…LGLPREMVYR (193 aa). An ATP-binding site is contributed by 225–231; the sequence is SGGVDSS.

Homodimer.

The catalysed reaction is XMP + L-glutamine + ATP + H2O = GMP + L-glutamate + AMP + diphosphate + 2 H(+). It participates in purine metabolism; GMP biosynthesis; GMP from XMP (L-Gln route): step 1/1. Catalyzes the synthesis of GMP from XMP. The polypeptide is GMP synthase [glutamine-hydrolyzing] (Neisseria gonorrhoeae (strain NCCP11945)).